We begin with the raw amino-acid sequence, 443 residues long: tRNA (guanine-N(7)-)-methyltransferase non-catalytic subunit TRM82 (443 aa).

The disordered stretch occupies residues 67–93; sequence ASKKLKTNDGEPVAQPKKQAKVPKPGP. WD repeat units lie at residues 97 to 137, 193 to 235, and 239 to 279; these read PVYQ…KDNI, GHVS…IVDK, and GHEE…LLFK.

This sequence belongs to the WD repeat TRM82 family. As to quaternary structure, forms a heterodimer with the catalytic subunit TRM8.

It localises to the nucleus. The protein operates within tRNA modification; N(7)-methylguanine-tRNA biosynthesis. Required for the formation of N(7)-methylguanine at position 46 (m7G46) in tRNA. In the complex, it is required to stabilize and induce conformational changes of the catalytic subunit. The sequence is that of tRNA (guanine-N(7)-)-methyltransferase non-catalytic subunit TRM82 from Kluyveromyces lactis (strain ATCC 8585 / CBS 2359 / DSM 70799 / NBRC 1267 / NRRL Y-1140 / WM37) (Yeast).